A 560-amino-acid polypeptide reads, in one-letter code: Beta-glucosidase 26, peroxisomal (560 aa).

A beta-D-glucoside contacts are provided by residues Gln33, His137, 182-183, Tyr326, Glu398, Trp450, 457-458, and Tyr466; these read NE and EW. Glu183 (proton donor) is an active-site residue. Residue Glu398 is the Nucleophile of the active site.

This sequence belongs to the glycosyl hydrolase 1 family.

It is found in the peroxisome. It carries out the reaction Hydrolysis of terminal, non-reducing beta-D-glucosyl residues with release of beta-D-glucose.. In terms of biological role, possesses beta-glucosidase activity toward 4-methyl-umbelliferyl-beta-D-glucoside in vitro. Possesses myrosinase activity toward indol-3-yl-methylglucosinolate (I3M) and 4-methoxy-indol-3-yl-methylglucosinolate (4MO-I3M) in vivo. Component of an inducible preinvasion resistance mechanism that prevents penetration of the nonhost fungal species B.graminis and E.pisi. Involved in indole glucosinolate (IGS) activation during pattern-triggered immunity (PTI). Functions as a myrosinase for the breakdown of flg22-triggered IGS. Required for both callose deposition and glucosinolate activation during pathogen-triggered resistance. During fungal attack, required for IGS activation that mediates broad-spectrum antifungal defense. This chain is Beta-glucosidase 26, peroxisomal, found in Arabidopsis thaliana (Mouse-ear cress).